The chain runs to 190 residues: Nucleoside triphosphate pyrophosphatase (190 aa).

Catalysis depends on Asp69, which acts as the Proton acceptor.

It belongs to the Maf family. It depends on a divalent metal cation as a cofactor.

It is found in the cytoplasm. The catalysed reaction is a ribonucleoside 5'-triphosphate + H2O = a ribonucleoside 5'-phosphate + diphosphate + H(+). It carries out the reaction a 2'-deoxyribonucleoside 5'-triphosphate + H2O = a 2'-deoxyribonucleoside 5'-phosphate + diphosphate + H(+). Its function is as follows. Nucleoside triphosphate pyrophosphatase. May have a dual role in cell division arrest and in preventing the incorporation of modified nucleotides into cellular nucleic acids. The sequence is that of Nucleoside triphosphate pyrophosphatase from Helicobacter pylori (strain J99 / ATCC 700824) (Campylobacter pylori J99).